We begin with the raw amino-acid sequence, 148 residues long: Large-conductance mechanosensitive channel (148 aa).

2 helical membrane-spanning segments follow: residues A9–F29 and I79–I99.

This sequence belongs to the MscL family. Homopentamer.

It is found in the cell inner membrane. Functionally, channel that opens in response to stretch forces in the membrane lipid bilayer. May participate in the regulation of osmotic pressure changes within the cell. The protein is Large-conductance mechanosensitive channel of Pseudomonas syringae pv. syringae (strain B728a).